The following is a 309-amino-acid chain: Porphobilinogen deaminase (309 aa).

The residue at position 242 (C242) is an S-(dipyrrolylmethanemethyl)cysteine.

The protein belongs to the HMBS family. In terms of assembly, monomer. Requires dipyrromethane as cofactor.

The enzyme catalyses 4 porphobilinogen + H2O = hydroxymethylbilane + 4 NH4(+). It participates in porphyrin-containing compound metabolism; protoporphyrin-IX biosynthesis; coproporphyrinogen-III from 5-aminolevulinate: step 2/4. Tetrapolymerization of the monopyrrole PBG into the hydroxymethylbilane pre-uroporphyrinogen in several discrete steps. This is Porphobilinogen deaminase from Shewanella frigidimarina (strain NCIMB 400).